Consider the following 270-residue polypeptide: MAPKVFYISDGTAITAEVFGHAVLSQFPLEFESLTIPFVETLAKAENVKRQINDCFITTGERPLVFHSIVKPEIRDIIYSSEGLDYDFLNTFVAPLEQHLGVSASPVLHRTHGKANQGYEARIDAINFAMDNDDGQTMKHMDQADLILLGVSRCGKTPSSLYLSMQFGIKAANYPFTEDDMDNLKLPEALKRNKKKLFGLTIDPVRLHEIRQSRMENSRYSSLKQCRLEVKEVEMMFKRERIPYIDTTNHSVEEIATKILDVTGLERHMF.

ADP is bound at residue 150–157 (GVSRCGKT).

This sequence belongs to the pyruvate, phosphate/water dikinase regulatory protein family. PSRP subfamily.

The enzyme catalyses [pyruvate, water dikinase] + ADP = [pyruvate, water dikinase]-phosphate + AMP + H(+). It carries out the reaction [pyruvate, water dikinase]-phosphate + phosphate + H(+) = [pyruvate, water dikinase] + diphosphate. Its function is as follows. Bifunctional serine/threonine kinase and phosphorylase involved in the regulation of the phosphoenolpyruvate synthase (PEPS) by catalyzing its phosphorylation/dephosphorylation. The chain is Putative phosphoenolpyruvate synthase regulatory protein from Shewanella oneidensis (strain ATCC 700550 / JCM 31522 / CIP 106686 / LMG 19005 / NCIMB 14063 / MR-1).